We begin with the raw amino-acid sequence, 131 residues long: ER membrane protein complex subunit 5 (131 aa).

Topologically, residues 1–3 (MAP) are cytoplasmic. Residues 4-22 (SLWKGLVGVGLFALAHAAF) form a helical membrane-spanning segment. Over 23-43 (SAAQHRSYMRLTEKEDESLPI) the chain is Lumenal. Residues 44-63 (DIVLQTLLAFAVTCYGIVHI) traverse the membrane as a helical segment. Residues 64-131 (AGEFKDMDAT…KLRKFDSLRR (68 aa)) are Cytoplasmic-facing. S120 bears the Phosphoserine mark.

Belongs to the membrane magnesium transporter (TC 1.A.67) family. Component of the ER membrane protein complex (EMC). In terms of tissue distribution, abundant in heart muscle and kidney with lower levels in liver and brain and very little expression in intestine or colon. In kidney, highest levels in distal convoluted tubule.

It is found in the endoplasmic reticulum membrane. The protein localises to the golgi apparatus membrane. It localises to the early endosome membrane. Part of the endoplasmic reticulum membrane protein complex (EMC) that enables the energy-independent insertion into endoplasmic reticulum membranes of newly synthesized membrane proteins. Preferentially accommodates proteins with transmembrane domains that are weakly hydrophobic or contain destabilizing features such as charged and aromatic residues. Involved in the cotranslational insertion of multi-pass membrane proteins in which stop-transfer membrane-anchor sequences become ER membrane spanning helices. It is also required for the post-translational insertion of tail-anchored/TA proteins in endoplasmic reticulum membranes. By mediating the proper cotranslational insertion of N-terminal transmembrane domains in an N-exo topology, with translocated N-terminus in the lumen of the ER, controls the topology of multi-pass membrane proteins like the G protein-coupled receptors. By regulating the insertion of various proteins in membranes, it is indirectly involved in many cellular processes. May be involved Mg(2+) transport. This is ER membrane protein complex subunit 5 from Mus musculus (Mouse).